Consider the following 95-residue polypeptide: Aspartyl/glutamyl-tRNA(Asn/Gln) amidotransferase subunit C (95 aa).

Belongs to the GatC family. Heterotrimer of A, B and C subunits.

The enzyme catalyses L-glutamyl-tRNA(Gln) + L-glutamine + ATP + H2O = L-glutaminyl-tRNA(Gln) + L-glutamate + ADP + phosphate + H(+). The catalysed reaction is L-aspartyl-tRNA(Asn) + L-glutamine + ATP + H2O = L-asparaginyl-tRNA(Asn) + L-glutamate + ADP + phosphate + 2 H(+). Allows the formation of correctly charged Asn-tRNA(Asn) or Gln-tRNA(Gln) through the transamidation of misacylated Asp-tRNA(Asn) or Glu-tRNA(Gln) in organisms which lack either or both of asparaginyl-tRNA or glutaminyl-tRNA synthetases. The reaction takes place in the presence of glutamine and ATP through an activated phospho-Asp-tRNA(Asn) or phospho-Glu-tRNA(Gln). In Phenylobacterium zucineum (strain HLK1), this protein is Aspartyl/glutamyl-tRNA(Asn/Gln) amidotransferase subunit C.